A 704-amino-acid chain; its full sequence is Glycine--tRNA ligase beta subunit (704 aa).

It belongs to the class-II aminoacyl-tRNA synthetase family. Tetramer of two alpha and two beta subunits.

It is found in the cytoplasm. It catalyses the reaction tRNA(Gly) + glycine + ATP = glycyl-tRNA(Gly) + AMP + diphosphate. This chain is Glycine--tRNA ligase beta subunit, found in Rhizobium etli (strain ATCC 51251 / DSM 11541 / JCM 21823 / NBRC 15573 / CFN 42).